The chain runs to 548 residues: (S)-beta-macrocarpene synthase (548 aa).

Residues Asp302 and Asp306 each contribute to the Mg(2+) site. Asp302, Asp306, Arg443, and Asn446 together coordinate substrate. The DDXXD motif motif lies at 302–306 (DDTLD). Mg(2+) is bound by residues Asn446, Ser450, and Glu454.

This sequence belongs to the terpene synthase family. In terms of assembly, monomer. Requires Mg(2+) as cofactor. It depends on Mn(2+) as a cofactor. Expressed in roots. Not detected in leaves, unless damaged by herbivory or infected by fungi.

Its subcellular location is the cytoplasm. It carries out the reaction (S)-beta-bisabolene = (S)-beta-macrocarpene. The enzyme catalyses (2E,6E)-farnesyl diphosphate = (S)-beta-bisabolene + diphosphate. It catalyses the reaction (2E)-geranyl diphosphate = (4S)-limonene + diphosphate. The catalysed reaction is (2E)-geranyl diphosphate = beta-myrcene + diphosphate. It carries out the reaction (2E)-geranyl diphosphate = terpinolene + diphosphate. The enzyme catalyses (2E)-geranyl diphosphate + H2O = (S)-linalool + diphosphate. It functions in the pathway secondary metabolite biosynthesis; terpenoid biosynthesis. Functionally, involved in the biosynthesis of the bicyclic sesquiterpene (S)-beta-macrocarpene. Can use both geranyl diphosphate and farnesyl diphosphate as substrate, but not geranylgeranyl diphosphate. Produces mainly (S)-beta-macrocarpene, but also smaller amounts of beta-bisabolene and (E)-beta-farnesene when used with farnesyl diphosphate as substrate. In the presence of geranyl diphosphate, produces the acyclic monoterpenes beta-myrcene and linalool along with minor amounts of the cyclic compounds limonene, alpha-thujene, sabinene and alpha-terpinolene. May be involved in plant defense. The polypeptide is (S)-beta-macrocarpene synthase (Zea mays (Maize)).